A 471-amino-acid polypeptide reads, in one-letter code: Heparan-sulfate 6-O-sulfotransferase 3 (471 aa).

At 1–4 (MDER) the chain is on the cytoplasmic side. Residues 5–27 (FNKWLLTPVLTLLFVVIMYQYVS) form a helical; Signal-anchor for type II membrane protein membrane-spanning segment. At 28-471 (PSCTSSCTNF…EDYNSQVVRW (444 aa)) the chain is on the lumenal side. The tract at residues 39–122 (EQPRAGEAGP…EAPENGSLPR (84 aa)) is disordered. Positions 41 to 62 (PRAGEAGPPAVPGPARRAQAPP) are enriched in low complexity. Positions 70–81 (QLPPPPRGPPEG) are enriched in pro residues. Acidic residues predominate over residues 88 to 114 (PEEEDEEPGDPREGEEEEEEDEPDPEA). N-linked (GlcNAc...) asparagine glycans are attached at residues Asn-117 and Asn-128. A 3'-phosphoadenylyl sulfate-binding site is contributed by 152–160 (HIQKTGGTT). Substrate-binding positions include 182–183 (KK), Arg-199, Trp-204, and His-209. The Proton acceptor role is filled by His-209. The N-linked (GlcNAc...) asparagine glycan is linked to Asn-231. 3'-phosphoadenylyl sulfate contacts are provided by Arg-245 and Ser-253. The substrate site is built by His-257 and Trp-264. N-linked (GlcNAc...) asparagine glycans are attached at residues Asn-324 and Asn-329. 377–379 (TQF) contributes to the 3'-phosphoadenylyl sulfate binding site. Asn-380 is a glycosylation site (N-linked (GlcNAc...) asparagine). 383–384 (RA) is a 3'-phosphoadenylyl sulfate binding site. The disordered stretch occupies residues 422–471 (TKQLEHQRDRQKRREERRLQREHRDHQWPKEDGAAEGTVTEDYNSQVVRW). Residues 423–454 (KQLEHQRDRQKRREERRLQREHRDHQWPKEDG) are compositionally biased toward basic and acidic residues. The segment covering 462–471 (EDYNSQVVRW) has biased composition (polar residues).

Belongs to the sulfotransferase 6 family.

It is found in the membrane. It carries out the reaction alpha-D-glucosaminyl-[heparan sulfate](n) + 3'-phosphoadenylyl sulfate = 6-sulfo-alpha-D-glucosaminyl-[heparan sulfate](n) + adenosine 3',5'-bisphosphate + H(+). In terms of biological role, 6-O-sulfation enzyme which catalyzes the transfer of sulfate from 3'-phosphoadenosine 5'-phosphosulfate (PAPS) to position 6 of the N-sulfoglucosamine residue (GlcNS) of heparan sulfate. This Homo sapiens (Human) protein is Heparan-sulfate 6-O-sulfotransferase 3 (HS6ST3).